The sequence spans 275 residues: Hydroxyethylthiazole kinase (275 aa).

Substrate is bound at residue M50. Residues R126 and S171 each coordinate ATP. Residue A200 coordinates substrate.

It belongs to the Thz kinase family. Mg(2+) is required as a cofactor.

It catalyses the reaction 5-(2-hydroxyethyl)-4-methylthiazole + ATP = 4-methyl-5-(2-phosphooxyethyl)-thiazole + ADP + H(+). The protein operates within cofactor biosynthesis; thiamine diphosphate biosynthesis; 4-methyl-5-(2-phosphoethyl)-thiazole from 5-(2-hydroxyethyl)-4-methylthiazole: step 1/1. Functionally, catalyzes the phosphorylation of the hydroxyl group of 4-methyl-5-beta-hydroxyethylthiazole (THZ). The chain is Hydroxyethylthiazole kinase from Acinetobacter baumannii (strain AB307-0294).